An 802-amino-acid chain; its full sequence is Cell division cycle 5-like protein (802 aa).

HTH myb-type domains follow at residues 1–56 (MPRI…WLDP) and 57–108 (SIKK…DKAA). DNA-binding regions (H-T-H motif) lie at residues 31 to 54 (WSRI…YEWL) and 82 to 104 (WRTI…EFLL). The tract at residues 108-143 (AQRDNEEETTDDPRKLKPGEIDPNPETKPARPDPID) is disordered. The segment covering 118-127 (DDPRKLKPGE) has biased composition (basic and acidic residues). Lys-135 is covalently cross-linked (Glycyl lysine isopeptide (Lys-Gly) (interchain with G-Cter in SUMO2)). Residues 142-245 (IDMDEDELEM…DADFRKLRQQ (104 aa)) adopt a coiled-coil conformation. A Nuclear localization signal motif is present at residues 165-271 (KKAKRKAREK…KDKQHLKRKK (107 aa)). Residues 200-206 (KKRKKKR) form a required for interaction with CTNNBL1 region. A Glycyl lysine isopeptide (Lys-Gly) (interchain with G-Cter in SUMO2) cross-link involves residue Lys-219. Thr-227 is subject to Phosphothreonine. Residues 246-262 (DLDGELRSEKEGRDRKK) show a composition bias toward basic and acidic residues. Residues 246–278 (DLDGELRSEKEGRDRKKDKQHLKRKKESDLPSA) form a disordered region. Residues 260–606 (RKKDKQHLKR…NKKGKTVGFG (347 aa)) form an interaction with PPP1R8 region. Phosphoserine occurs at positions 303 and 358. Phosphothreonine occurs at positions 377, 385, 396, 404, 411, and 415. Over residues 409–418 (LSTPFRTPSH) the composition is skewed to polar residues. Residues 409–459 (LSTPFRTPSHGSEGLTPRSGTTPKPVINSTPGRTPLRDKLNINPEDGMADY) form a disordered region. Ser-417 is subject to Phosphoserine. Phosphothreonine is present on residues Thr-424 and Thr-430. Polar residues predominate over residues 426-440 (RSGTTPKPVINSTPG). A Phosphoserine modification is found at Ser-437. Phosphothreonine occurs at positions 438 and 442. Lys-487 participates in a covalent cross-link: Glycyl lysine isopeptide (Lys-Gly) (interchain with G-Cter in SUMO2). Residues 501–659 (ELEEREIDDT…GELSSEAYNQ (159 aa)) form an interaction with DAPK3 region. Coiled coils occupy residues 676–701 (RYTR…INRG) and 764–802 (PRRL…KAKF). Residues 706 to 800 (EAKRAAKMEK…LLLEKETLKA (95 aa)) form an interaction with PLRG1 region.

Belongs to the CEF1 family. In terms of assembly, homodimer. Interacts with DAPK3. Component of the precatalytic, catalytic and postcatalytic spliceosome complexes. Part of a spliceosomal 'core' complex consisting of CDC5L, PLRG1, SPF27, CCAP1, CCAP3 and CCAP6. Interacts with PLRG1, Lodestar/TTF2, and NIPP1/PPP1R8. Component of the minor spliceosome, which splices U12-type introns. Within this complex, interacts with SCNM1. Component of the PRP19-CDC5L splicing complex composed of a core complex comprising a homotetramer of PRPF19, CDC5L, PLRG1 and BCAS2, and at least three less stably associated proteins CTNNBL1, CWC15 and HSPA8. Interacts (via its C-terminus) directly in the complex with PRPF19 and BCAS2. Interacts (via its C-terminus) directly with PRGL1 (via its WD40 repeat domain); the interaction is required for mRNA splicing but not for spliceosome assembly. Also interacts with CTNNBL1. Interacts with PRPF19 (via N-terminus). Interacts with USB1. Interacts with DDX41. Phosphorylated on serine and threonine residues. Phosphorylation on Thr-411 and Thr-438 is required for CDC5L-mediated mRNA splicing. Has no effect on subcellular location nor on homodimerization. Phosphorylated in vitro by CDK2. Phosphorylation enhances interaction with PPP1R8.

It localises to the nucleus. Its subcellular location is the nucleus speckle. It is found in the cytoplasm. Its function is as follows. DNA-binding protein involved in cell cycle control. May act as a transcription activator. Plays a role in pre-mRNA splicing as core component of precatalytic, catalytic and postcatalytic spliceosomal complexes. Component of the PRP19-CDC5L complex that forms an integral part of the spliceosome and is required for activating pre-mRNA splicing. The PRP19-CDC5L complex may also play a role in the response to DNA damage (DDR). As a component of the minor spliceosome, involved in the splicing of U12-type introns in pre-mRNAs. This Bos taurus (Bovine) protein is Cell division cycle 5-like protein (CDC5L).